Here is a 264-residue protein sequence, read N- to C-terminus: 3-methyl-2-oxobutanoate hydroxymethyltransferase (264 aa).

Mg(2+) contacts are provided by D42 and D81. Residues 42 to 43, D81, and K110 contribute to the 3-methyl-2-oxobutanoate site; that span reads DS. E112 contributes to the Mg(2+) binding site. Residue E179 is the Proton acceptor of the active site.

It belongs to the PanB family. Homodecamer; pentamer of dimers. It depends on Mg(2+) as a cofactor.

The protein localises to the cytoplasm. It catalyses the reaction 3-methyl-2-oxobutanoate + (6R)-5,10-methylene-5,6,7,8-tetrahydrofolate + H2O = 2-dehydropantoate + (6S)-5,6,7,8-tetrahydrofolate. It functions in the pathway cofactor biosynthesis; (R)-pantothenate biosynthesis; (R)-pantoate from 3-methyl-2-oxobutanoate: step 1/2. In terms of biological role, catalyzes the reversible reaction in which hydroxymethyl group from 5,10-methylenetetrahydrofolate is transferred onto alpha-ketoisovalerate to form ketopantoate. In Francisella tularensis subsp. tularensis (strain FSC 198), this protein is 3-methyl-2-oxobutanoate hydroxymethyltransferase.